Consider the following 333-residue polypeptide: Fe(3+)-citrate import system permease protein YfmD (333 aa).

9 helical membrane passes run 13–33, 67–87, 97–117, 121–141, 151–171, 201–221, 238–258, 279–299, and 302–322; these read LMMF…NLSV, TLIG…MQAM, IFGV…ILPA, SSVI…YMIA, LALS…AIII, FSVI…VLGL, ILIS…AGPI, YVLP…DVLA, and IAFP…TPFF.

Belongs to the binding-protein-dependent transport system permease family. FecCD subfamily. As to quaternary structure, the complex is composed of one ATP-binding protein (YfmF), two transmembrane proteins (YfmD and YfmE) and a solute-binding protein (YfmC).

The protein localises to the cell membrane. In terms of biological role, part of the ABC transporter complex YfmCDEF involved in citrate-dependent Fe(3+) import. Involved in the translocation of the substrate across the membrane. The polypeptide is Fe(3+)-citrate import system permease protein YfmD (yfmD) (Bacillus subtilis (strain 168)).